The sequence spans 525 residues: Cytochrome P450 monooxygenase bsc2 (525 aa).

The helical transmembrane segment at 12-32 (SLFILWLTTLLVSVLATAAYI) threads the bilayer. Residues Asn-86 and Asn-317 are each glycosylated (N-linked (GlcNAc...) asparagine). Cys-456 is a heme binding site.

The protein belongs to the cytochrome P450 family. Heme is required as a cofactor.

It is found in the membrane. It participates in mycotoxin biosynthesis. Functionally, cytochrome P450 monooxygenase; part of the gene cluster that mediates the biosynthesis of the diterpene glucoside brassicicene C. In the first step of the brassicicene C biosynthesis, the bifunctional diterpene synthase bsc8 that possesses both prenyl transferase and terpene cyclase activity, converts isopentenyl diphosphate and dimethylallyl diphosphate into geranylgeranyl diphosphate (GGDP) that is further converted into fusicocca-2,10(14)-diene, the first precursor for brassicicene C. Fusicocca-2,10(14)-diene is then substrate of cytochrome P450 monooxygenase bsc1 for hydroxylation at the C-8 position. Oxidation at C-16 position to aldehyde is then catalyzed by the cytochrome P450 monooyxygenase bsc7, yielding fusicocca-2,10(14)-diene-8-beta,16-diol. Follows the isomerization of the double bond and reduction of aldehyde to alcohol catalyzed by the short-chain dehydrogenase/reductase bsc3 to yield the diol compound fusicocca-1,10(14)-diene-8 beta,16-diol. The next step is the oxidation at the C-3 position of fusicocca-2,10(14)-diene-8-beta,16-diol catalyzed by the alpha-ketoglutarate dependent dioxygenase bsc9, to produce a triol compound. Methylation of the hydroxy group at position 16 is performed by the methyltransferase bsc6. 16-O-methylation is followed by oxidation at the C-13 position to ketone and an alkyl shift of the methyl group leads to brassicicene C. Although the probable acetyltransferase bsc4 is included in the gene cluster, no acetylation reactions are necessary for brassicicene C biosynthesis. However, the fact that brassicicene E, which is a structurally related compound having an acetoxy group at position 12, was previously isolated from another strain of A.brassicicola suggests that the ATCC 96836 strain might also produce a small amount of brassicicene E. The protein is Cytochrome P450 monooxygenase bsc2 of Alternaria brassicicola (Dark leaf spot agent).